The primary structure comprises 117 residues: Serine rich endogenous peptide 5 (117 aa).

The signal sequence occupies residues 1-31 (MATKTSNFVSLRVSLFILLLFISSQVAIADA). An SCOOP motif motif is present at residues 41-55 (LQIVRRSRSQRGRQY). The segment covering 42–51 (QIVRRSRSQR) has biased composition (basic residues). Positions 42–117 (QIVRRSRSQR…LPYASSPTST (76 aa)) are disordered. A SxS motif essential for MIK2 binding motif is present at residues 47-49 (SRS). The span at 60–84 (LRVPPPPPPPLPQMPSAATPPPMPQ) shows a compositional bias: pro residues.

As to quaternary structure, interacts with MIK2 (via extracellular leucine-rich repeat domain); this interaction triggers the formation of complex between MIK2 and the BAK1/SERK3 and SERK4 coreceptors, and subsequent BAK1 activation by phosphorylation.

The protein localises to the cell membrane. It localises to the secreted. The protein resides in the extracellular space. It is found in the apoplast. In terms of biological role, brassicaceae-specific phytocytokine (plant endogenous peptide released into the apoplast) perceived by MIK2 in a BAK1/SERK3 and SERK4 coreceptors-dependent manner, that modulates various physiological and antimicrobial processes including growth prevention and reactive oxygen species (ROS) response regulation. This chain is Serine rich endogenous peptide 5, found in Arabidopsis thaliana (Mouse-ear cress).